Consider the following 174-residue polypeptide: Superoxide dismutase [Cu-Zn] (174 aa).

The first 23 residues, 1–23 (MIRLSAAAALGLAAALAASPALA), serve as a signal peptide directing secretion. Residues His68, His70, and His86 each contribute to the Cu cation site. Cys75 and Cys170 are joined by a disulfide. Zn(2+)-binding residues include His86, His95, Asp104, and Asp107. Residue His150 coordinates Cu cation.

This sequence belongs to the Cu-Zn superoxide dismutase family. As to quaternary structure, homodimer. The cofactor is Cu cation. Requires Zn(2+) as cofactor.

Its subcellular location is the periplasm. The catalysed reaction is 2 superoxide + 2 H(+) = H2O2 + O2. Functionally, destroys radicals which are normally produced within the cells and which are toxic to biological systems. May function against extracytoplasmic toxic oxygen species. The polypeptide is Superoxide dismutase [Cu-Zn] (sodC) (Caulobacter vibrioides (strain ATCC 19089 / CIP 103742 / CB 15) (Caulobacter crescentus)).